The primary structure comprises 506 residues: UDP-N-acetylmuramoylalanine--D-glutamate ligase (506 aa).

128-134 contacts ATP; sequence GTNGKTT.

It belongs to the MurCDEF family.

The protein localises to the cytoplasm. The enzyme catalyses UDP-N-acetyl-alpha-D-muramoyl-L-alanine + D-glutamate + ATP = UDP-N-acetyl-alpha-D-muramoyl-L-alanyl-D-glutamate + ADP + phosphate + H(+). The protein operates within cell wall biogenesis; peptidoglycan biosynthesis. Functionally, cell wall formation. Catalyzes the addition of glutamate to the nucleotide precursor UDP-N-acetylmuramoyl-L-alanine (UMA). In Albidiferax ferrireducens (strain ATCC BAA-621 / DSM 15236 / T118) (Rhodoferax ferrireducens), this protein is UDP-N-acetylmuramoylalanine--D-glutamate ligase.